The primary structure comprises 566 residues: Membrane protein insertase YidC (566 aa).

Transmembrane regions (helical) follow at residues 3 to 23 (IKRI…FNAW), 346 to 366 (GWLW…HAVV), 369 to 389 (WGWS…WFSA), 436 to 456 (GGCL…YVII), and 509 to 529 (MWIL…GLVL).

Belongs to the OXA1/ALB3/YidC family. Type 1 subfamily. In terms of assembly, interacts with the Sec translocase complex via SecD. Specifically interacts with transmembrane segments of nascent integral membrane proteins during membrane integration.

It localises to the cell inner membrane. Functionally, required for the insertion and/or proper folding and/or complex formation of integral membrane proteins into the membrane. Involved in integration of membrane proteins that insert both dependently and independently of the Sec translocase complex, as well as at least some lipoproteins. Aids folding of multispanning membrane proteins. This is Membrane protein insertase YidC from Coxiella burnetii (strain RSA 331 / Henzerling II).